The chain runs to 182 residues: Lipoprotein signal peptidase (182 aa).

A run of 3 helical transmembrane segments spans residues Val-12–Trp-32, Ala-68–Val-88, and Val-91–Ile-111. Residues Asp-127 and Asp-140 contribute to the active site. The chain crosses the membrane as a helical span at residues Val-135–Leu-155.

It belongs to the peptidase A8 family.

It localises to the cell membrane. It carries out the reaction Release of signal peptides from bacterial membrane prolipoproteins. Hydrolyzes -Xaa-Yaa-Zaa-|-(S,diacylglyceryl)Cys-, in which Xaa is hydrophobic (preferably Leu), and Yaa (Ala or Ser) and Zaa (Gly or Ala) have small, neutral side chains.. It participates in protein modification; lipoprotein biosynthesis (signal peptide cleavage). Its function is as follows. This protein specifically catalyzes the removal of signal peptides from prolipoproteins. The sequence is that of Lipoprotein signal peptidase from Bifidobacterium longum (strain DJO10A).